Here is a 591-residue protein sequence, read N- to C-terminus: Metalloendopeptidase OPG085 (591 aa).

Residue H41 coordinates Zn(2+). The active site involves E44. H45 provides a ligand contact to Zn(2+).

The protein belongs to the peptidase M44 family. The cofactor is Zn(2+). Post-translationally, undergoes proteolytic processing during the course of infection. May be cleaved into 46 kDa and 22 kDa products (Potential).

Its subcellular location is the virion. In terms of biological role, probably involved in maturation of some viral proteins by processing them preferentially at Ala-Gly-|-Ser/Thr/Lys motifs. Does not seem to be responsible for the cleavage of major core proteins. The sequence is that of Metalloendopeptidase OPG085 (OPG085) from Homo sapiens (Human).